Reading from the N-terminus, the 176-residue chain is RING-H2 finger protein ATL73 (176 aa).

The N-terminal stretch at 1–16 is a signal peptide; the sequence is MARFLLATQATPTISA. Residues 42-62 form a helical membrane-spanning segment; that stretch reads VIILAALLCALICALGINSVL. Residues 113–155 form an RING-type; atypical zinc finger; the sequence is CLICLGDFVEGETVRVLPKCNHGFHVKCIDTWLLSHSSCPTCR.

It belongs to the RING-type zinc finger family. ATL subfamily.

It is found in the membrane. The catalysed reaction is S-ubiquitinyl-[E2 ubiquitin-conjugating enzyme]-L-cysteine + [acceptor protein]-L-lysine = [E2 ubiquitin-conjugating enzyme]-L-cysteine + N(6)-ubiquitinyl-[acceptor protein]-L-lysine.. Its pathway is protein modification; protein ubiquitination. The polypeptide is RING-H2 finger protein ATL73 (ATL73) (Arabidopsis thaliana (Mouse-ear cress)).